A 412-amino-acid polypeptide reads, in one-letter code: Divalent metal cation transporter MntH (412 aa).

The Cytoplasmic portion of the chain corresponds to 1 to 19 (MTNYRVESSSGRAARKMRL). A helical membrane pass occupies residues 20 to 39 (ALMGPAFIAAIGYIDPGNFA). The Periplasmic segment spans residues 40-51 (TNIQAGASFGYQ). The chain crosses the membrane as a helical span at residues 52–71 (LLWVVVWANLMAMLIQILSA). At 72-95 (KLGIATGKNLAEQIRDHYPRPVVW) the chain is on the cytoplasmic side. A helical membrane pass occupies residues 96–118 (FYWVQAEIIAMATDLAEFIGAAI). The Periplasmic portion of the chain corresponds to 119 to 125 (GFKLILG). The helical transmembrane segment at 126–145 (VSLLQGAVLTGIATFLILML) threads the bilayer. The Cytoplasmic segment spans residues 146–155 (QRRGQKPLEK). A helical transmembrane segment spans residues 156–175 (VIGGLLLFVAAAYIVELIFS). Residues 176 to 196 (QPNLAQLGKGMVIPSLPTSEA) are Periplasmic-facing. Residues 197–220 (VFLAAGVLGATIMPHVIYLHSSLT) form a helical membrane-spanning segment. At 221 to 238 (QHLHGGSRQQRYSATKWD) the chain is on the cytoplasmic side. The helical transmembrane segment at 239–258 (VAIAMTIAGFVNLAMMATAA) threads the bilayer. At 259 to 276 (AAFHFSGHTGVADLDEAY) the chain is on the periplasmic side. A helical transmembrane segment spans residues 277 to 297 (LTLQPLLSHAAATVFGLSLVA). Residues 298-327 (AGLSSTVVGTLAGQVVMQGFIRFHIPLWVR) are Cytoplasmic-facing. The chain crosses the membrane as a helical span at residues 328–344 (RTVTMLPSFIVILMGLD). Residues 345-350 (PTRILV) are Periplasmic-facing. Residues 351–370 (MSQVLLSFGIALALVPLLIF) form a helical membrane-spanning segment. Residues 371–387 (TSDSKLMGDLVNSKRVK) are Cytoplasmic-facing. The helical transmembrane segment at 388 to 406 (QTGWVIVVLVVALNIWLLV) threads the bilayer. Residues 407-412 (GTALGL) lie on the Periplasmic side of the membrane.

Belongs to the NRAMP family.

It localises to the cell inner membrane. Functionally, h(+)-stimulated, divalent metal cation uptake system. The polypeptide is Divalent metal cation transporter MntH (Escherichia fergusonii (strain ATCC 35469 / DSM 13698 / CCUG 18766 / IAM 14443 / JCM 21226 / LMG 7866 / NBRC 102419 / NCTC 12128 / CDC 0568-73)).